Reading from the N-terminus, the 367-residue chain is Phosphoribosylaminoimidazole-succinocarboxamide synthase (367 aa).

Belongs to the SAICAR synthetase family.

The enzyme catalyses 5-amino-1-(5-phospho-D-ribosyl)imidazole-4-carboxylate + L-aspartate + ATP = (2S)-2-[5-amino-1-(5-phospho-beta-D-ribosyl)imidazole-4-carboxamido]succinate + ADP + phosphate + 2 H(+). It functions in the pathway purine metabolism; IMP biosynthesis via de novo pathway; 5-amino-1-(5-phospho-D-ribosyl)imidazole-4-carboxamide from 5-amino-1-(5-phospho-D-ribosyl)imidazole-4-carboxylate: step 1/2. The polypeptide is Phosphoribosylaminoimidazole-succinocarboxamide synthase (Aliivibrio salmonicida (strain LFI1238) (Vibrio salmonicida (strain LFI1238))).